Here is a 269-residue protein sequence, read N- to C-terminus: Tryptophan synthase alpha chain (269 aa).

Catalysis depends on proton acceptor residues E49 and D60.

Belongs to the TrpA family. As to quaternary structure, tetramer of two alpha and two beta chains.

It catalyses the reaction (1S,2R)-1-C-(indol-3-yl)glycerol 3-phosphate + L-serine = D-glyceraldehyde 3-phosphate + L-tryptophan + H2O. It participates in amino-acid biosynthesis; L-tryptophan biosynthesis; L-tryptophan from chorismate: step 5/5. Functionally, the alpha subunit is responsible for the aldol cleavage of indoleglycerol phosphate to indole and glyceraldehyde 3-phosphate. The protein is Tryptophan synthase alpha chain of Klebsiella aerogenes (Enterobacter aerogenes).